Consider the following 198-residue polypeptide: Prolactin (198 aa).

3 disulfide bridges follow: Cys-4–Cys-11, Cys-58–Cys-173, and Cys-190–Cys-198.

It belongs to the somatotropin/prolactin family. In terms of tissue distribution, pituitary gland.

It is found in the secreted. The sequence is that of Prolactin from Chelonia mydas (Green sea-turtle).